The sequence spans 674 residues: Translation initiation factor IF-2 (674 aa).

The 171-residue stretch at 174-344 folds into the tr-type G domain; the sequence is IRPPVVTVMG…LLVAELREIK (171 aa). The segment at 183–190 is G1; it reads GHVDHGKT. 183 to 190 provides a ligand contact to GTP; the sequence is GHVDHGKT. Positions 208–212 are G2; the sequence is GITQS. The G3 stretch occupies residues 229–232; the sequence is DTPG. GTP contacts are provided by residues 229–233 and 283–286; these read DTPGH and NKID. Residues 283–286 are G4; the sequence is NKID. Residues 320-322 are G5; the sequence is SAR.

This sequence belongs to the TRAFAC class translation factor GTPase superfamily. Classic translation factor GTPase family. IF-2 subfamily.

The protein localises to the cytoplasm. In terms of biological role, one of the essential components for the initiation of protein synthesis. Protects formylmethionyl-tRNA from spontaneous hydrolysis and promotes its binding to the 30S ribosomal subunits. Also involved in the hydrolysis of GTP during the formation of the 70S ribosomal complex. The sequence is that of Translation initiation factor IF-2 from Pseudothermotoga lettingae (strain ATCC BAA-301 / DSM 14385 / NBRC 107922 / TMO) (Thermotoga lettingae).